Consider the following 432-residue polypeptide: Cysteine desulfurase, mitosomal (432 aa).

Pyridoxal 5'-phosphate contacts are provided by residues 102–103, Q212, and 232–234; these read AT and CAH. K235 is modified (N6-(pyridoxal phosphate)lysine). T272 is a binding site for pyridoxal 5'-phosphate. Catalysis depends on C357, which acts as the Cysteine persulfide intermediate. C357 contributes to the [2Fe-2S] cluster binding site.

The protein belongs to the class-V pyridoxal-phosphate-dependent aminotransferase family. NifS/IscS subfamily. Pyridoxal 5'-phosphate serves as cofactor.

It localises to the mitosome. It catalyses the reaction (sulfur carrier)-H + L-cysteine = (sulfur carrier)-SH + L-alanine. In terms of biological role, catalyzes the removal of elemental sulfur from cysteine to produce alanine. It supplies the inorganic sulfur for iron-sulfur (Fe-S) clusters in mitosomes. The sequence is that of Cysteine desulfurase, mitosomal from Encephalitozoon cuniculi (strain GB-M1) (Microsporidian parasite).